We begin with the raw amino-acid sequence, 546 residues long: 3-(3-hydroxy-phenyl)propionate/3-hydroxycinnamic acid hydroxylase 2 (546 aa).

Residues 10–39 and 278–288 contribute to the FAD site; these read SVAI…VVER and FVAGRIALVGD.

The protein belongs to the PheA/TfdB FAD monooxygenase family. It depends on FAD as a cofactor.

It carries out the reaction 3-(3-hydroxyphenyl)propanoate + NADH + O2 + H(+) = 3-(2,3-dihydroxyphenyl)propanoate + NAD(+) + H2O. The enzyme catalyses (2E)-3-(3-hydroxyphenyl)prop-2-enoate + NADH + O2 + H(+) = (2E)-3-(2,3-dihydroxyphenyl)prop-2-enoate + NAD(+) + H2O. It participates in aromatic compound metabolism; 3-phenylpropanoate degradation. Catalyzes the insertion of one atom of molecular oxygen into position 2 of the phenyl ring of 3-(3-hydroxyphenyl)propionate (3-HPP) and hydroxycinnamic acid (3HCI). This Burkholderia vietnamiensis (strain G4 / LMG 22486) (Burkholderia cepacia (strain R1808)) protein is 3-(3-hydroxy-phenyl)propionate/3-hydroxycinnamic acid hydroxylase 2.